The following is a 253-amino-acid chain: Coenzyme F420:L-glutamate ligase (253 aa).

GTP contacts are provided by residues 9–12, 38–39, and Lys43; these read LPEI and ST. A divalent metal cation is bound at residue Asp113. Position 116 (Asn116) interacts with GTP. A divalent metal cation contacts are provided by Asp148, Thr149, and Glu206. 204-211 contributes to the GTP binding site; sequence AGEGDDGT.

It belongs to the CofE family. As to quaternary structure, homodimer. The cofactor is Mg(2+). Mn(2+) is required as a cofactor. K(+) serves as cofactor.

It carries out the reaction oxidized coenzyme F420-0 + GTP + L-glutamate = oxidized coenzyme F420-1 + GDP + phosphate + H(+). It catalyses the reaction oxidized coenzyme F420-1 + GTP + L-glutamate = oxidized coenzyme F420-2 + GDP + phosphate + H(+). It participates in cofactor biosynthesis; coenzyme F420 biosynthesis. In terms of biological role, catalyzes the GTP-dependent successive addition of two or more gamma-linked L-glutamates to the L-lactyl phosphodiester of 7,8-didemethyl-8-hydroxy-5-deazariboflavin (F420-0) to form coenzyme F420-0-glutamyl-glutamate (F420-2) or polyglutamated F420 derivatives. The protein is Coenzyme F420:L-glutamate ligase of Natronomonas pharaonis (strain ATCC 35678 / DSM 2160 / CIP 103997 / JCM 8858 / NBRC 14720 / NCIMB 2260 / Gabara) (Halobacterium pharaonis).